The following is a 488-amino-acid chain: MNGNKIRTRFAPSPTGYMHVGNLRTALYAYLIAKHENGDFLLRIEDTDQERQVEGALDIIYNTLKMTGIHHDEGPDIGGPVGPYVQSERKHIYTEYAQKLIDKGEAYYCFCTKERLDMLRENSESLGRPHKYDKHCSHLSKEEIEENLKAGIPFVIRQNNPNKGTTYFEDEIFGKITVDNSELDDMVLIKSDGFPTYNFANVVDDHLMGITHVVRGSEYLSSSPKYNRLYDAFGWDVPKYIHCPPIMKDSHSKLSKRNGDASFQDLLEKGYLKDAILNYIALLGWNPGTTEEIFSLEDLIGKFDYKSINKAPAIFDNKKLKWMNGEYIRMFSLEEFHKLALPYYKGVITKDFDLLKISELLHTRTELLSEIPEQVDFFDELPEYSCDLYVHKKMKTNFENSLESLEKALPVLESIDNWNTETIHDSIMELIKELEVKNGIVLWPIRTAVSGKKFTPGGAFEIAEILGKEETLKRVKIGIEKLKNEINQ.

A 'HIGH' region motif is present at residues 12-22; sequence PSPTGYMHVGN. Zn(2+) contacts are provided by Cys109, Cys111, Cys136, and His138. The 'KMSKS' region signature appears at 253–257; that stretch reads KLSKR. Residue Lys256 coordinates ATP.

This sequence belongs to the class-I aminoacyl-tRNA synthetase family. Glutamate--tRNA ligase type 1 subfamily. In terms of assembly, monomer. The cofactor is Zn(2+).

The protein localises to the cytoplasm. The catalysed reaction is tRNA(Glu) + L-glutamate + ATP = L-glutamyl-tRNA(Glu) + AMP + diphosphate. In terms of biological role, catalyzes the attachment of glutamate to tRNA(Glu) in a two-step reaction: glutamate is first activated by ATP to form Glu-AMP and then transferred to the acceptor end of tRNA(Glu). The protein is Glutamate--tRNA ligase of Clostridium tetani (strain Massachusetts / E88).